A 350-amino-acid chain; its full sequence is Histidinol-phosphate aminotransferase (350 aa).

Lys209 is modified (N6-(pyridoxal phosphate)lysine).

It belongs to the class-II pyridoxal-phosphate-dependent aminotransferase family. Histidinol-phosphate aminotransferase subfamily. As to quaternary structure, homodimer. Pyridoxal 5'-phosphate serves as cofactor.

The catalysed reaction is L-histidinol phosphate + 2-oxoglutarate = 3-(imidazol-4-yl)-2-oxopropyl phosphate + L-glutamate. It functions in the pathway amino-acid biosynthesis; L-histidine biosynthesis; L-histidine from 5-phospho-alpha-D-ribose 1-diphosphate: step 7/9. The chain is Histidinol-phosphate aminotransferase from Citrifermentans bemidjiense (strain ATCC BAA-1014 / DSM 16622 / JCM 12645 / Bem) (Geobacter bemidjiensis).